The chain runs to 432 residues: Neuronal pentraxin-2 (432 aa).

An N-terminal signal peptide occupies residues 1 to 14; the sequence is MLALLTAGVALAVA. N-linked (GlcNAc...) asparagine glycans are attached at residues N149 and N190. One can recognise a Pentraxin (PTX) domain in the interval 224 to 425; the sequence is DAFKVSLPLR…GASKWPVETC (202 aa). C254 and C314 are disulfide-bonded. Positions 278, 356, 357, 358, and 368 each coordinate Ca(2+). A glycan (N-linked (GlcNAc...) asparagine) is linked at N394.

Homooligomer or heterooligomer (probably pentamer) with neuronal pentraxin receptor (NPTXR). Requires Ca(2+) as cofactor.

The protein resides in the secreted. Functionally, likely to play role in the modification of cellular properties that underlie long-term plasticity. Binds to agar matrix in a calcium-dependent manner. The polypeptide is Neuronal pentraxin-2 (Nptx2) (Rattus norvegicus (Rat)).